The following is a 587-amino-acid chain: Ankyrin repeat and SOCS box protein 14 (587 aa).

ANK repeat units lie at residues 81–110 (NGWL…PSTW), 116–145 (NGET…NPNA), 149–178 (EGNS…DVNL), 182–211 (NERT…YPDA), 215–244 (YGFT…DVHS), 248–277 (DSSS…DANI), 281–310 (SGHL…IAAI), 313–342 (SGIS…DVNF), 355–384 (QRKS…LPNQ), 385–414 (DPVN…NVNY), and 416–449 (CRVN…DTER). The SOCS box domain occupies 521–576 (WPEIHFILANPRSLQHLCRLKIRKCMGRLRLRCPVFMSFLPLPNLLKAYVLYKEYD).

Belongs to the ankyrin SOCS box (ASB) family. In terms of assembly, interacts with MAPRE2; this interaction promotes MAPRE2 degradation.

Its pathway is protein modification; protein ubiquitination. May be a substrate-recognition component of a SCF-like ECS (Elongin-Cullin-SOCS-box protein) E3 ubiquitin-protein ligase complex which mediates the ubiquitination and subsequent proteasomal degradation of target proteins. Plays a role in the inhibition of cardiomyocyte nuclear proliferation by mediating the ubiquitination and degradation of MAPRE2. This Mus musculus (Mouse) protein is Ankyrin repeat and SOCS box protein 14 (Asb14).